A 634-amino-acid polypeptide reads, in one-letter code: Chaperone protein dnaK2 (634 aa).

A Phosphothreonine; by autocatalysis modification is found at T197. Residues 592–634 (IGSSVYQQPGNQPPAPGTPDSNESNDKGGDDDVIDADFTETKD) form a disordered region. The span at 622 to 634 (DDVIDADFTETKD) shows a compositional bias: acidic residues.

The protein belongs to the heat shock protein 70 family.

Functionally, acts as a chaperone. The sequence is that of Chaperone protein dnaK2 (dnaK2) from Prochlorococcus marinus subsp. pastoris (strain CCMP1986 / NIES-2087 / MED4).